A 381-amino-acid polypeptide reads, in one-letter code: Estradiol 17-beta-dehydrogenase 2 (381 aa).

The chain crosses the membrane as a helical; Signal-anchor for type II membrane protein span at residues 4-24 (FSSESAWLCLTATAVLGGMLL). NAD(+) is bound at residue 83-112 (QKAVLVTGADSGFGHALAKHLDKLGFTVFA). Ser220 is a substrate binding site. Tyr233 (proton acceptor) is an active-site residue.

It belongs to the short-chain dehydrogenases/reductases (SDR) family. In terms of assembly, homodimer. In terms of tissue distribution, highly expressed in the placenta, and in the small intestine, and liver.

It localises to the endoplasmic reticulum membrane. The catalysed reaction is 17beta-estradiol + NAD(+) = estrone + NADH + H(+). The enzyme catalyses testosterone + NAD(+) = androst-4-ene-3,17-dione + NADH + H(+). It catalyses the reaction 17beta-hydroxy-5alpha-androstan-3-one + NAD(+) = 5alpha-androstan-3,17-dione + NADH + H(+). It carries out the reaction (20S)-hydroxypregn-4-en-3-one + NAD(+) = progesterone + NADH + H(+). Catalyzes the NAD-dependent oxidation of highly active 17beta-hydroxysteroids, such as estradiol (E2), testosterone (T), and dihydrotestosterone (DHT), to their less active forms and thus regulates the biological potency of these steroids. Oxidizes estradiol to estrone, testosterone to androstenedione, and dihydrotestosterone to 5alpha-androstan-3,17-dione. Also has 20-alpha-HSD activity. This is Estradiol 17-beta-dehydrogenase 2 (Hsd17b2) from Rattus norvegicus (Rat).